Reading from the N-terminus, the 473-residue chain is Bifunctional protein HldE (473 aa).

A ribokinase region spans residues 1–316 (MILPDFSLAR…AIAIHGQRAP (316 aa)). Residue 193–196 (NLSE) participates in ATP binding. Residue aspartate 262 is part of the active site. The cytidylyltransferase stretch occupies residues 342 to 473 (VTNGCFDLLH…TRIIEAIRNG (132 aa)).

It in the N-terminal section; belongs to the carbohydrate kinase PfkB family. The protein in the C-terminal section; belongs to the cytidylyltransferase family. In terms of assembly, homodimer.

It catalyses the reaction D-glycero-beta-D-manno-heptose 7-phosphate + ATP = D-glycero-beta-D-manno-heptose 1,7-bisphosphate + ADP + H(+). The enzyme catalyses D-glycero-beta-D-manno-heptose 1-phosphate + ATP + H(+) = ADP-D-glycero-beta-D-manno-heptose + diphosphate. It functions in the pathway nucleotide-sugar biosynthesis; ADP-L-glycero-beta-D-manno-heptose biosynthesis; ADP-L-glycero-beta-D-manno-heptose from D-glycero-beta-D-manno-heptose 7-phosphate: step 1/4. It participates in nucleotide-sugar biosynthesis; ADP-L-glycero-beta-D-manno-heptose biosynthesis; ADP-L-glycero-beta-D-manno-heptose from D-glycero-beta-D-manno-heptose 7-phosphate: step 3/4. Catalyzes the phosphorylation of D-glycero-D-manno-heptose 7-phosphate at the C-1 position to selectively form D-glycero-beta-D-manno-heptose-1,7-bisphosphate. Its function is as follows. Catalyzes the ADP transfer from ATP to D-glycero-beta-D-manno-heptose 1-phosphate, yielding ADP-D-glycero-beta-D-manno-heptose. The sequence is that of Bifunctional protein HldE from Methylococcus capsulatus (strain ATCC 33009 / NCIMB 11132 / Bath).